Consider the following 396-residue polypeptide: 8-amino-7-oxononanoate synthase (396 aa).

Arg21 contacts substrate. Position 108 to 109 (108 to 109 (GY)) interacts with pyridoxal 5'-phosphate. His133 provides a ligand contact to substrate. Positions 179, 207, and 236 each coordinate pyridoxal 5'-phosphate. Lys239 carries the N6-(pyridoxal phosphate)lysine modification. Residue Thr353 participates in substrate binding.

The protein belongs to the class-II pyridoxal-phosphate-dependent aminotransferase family. BioF subfamily. As to quaternary structure, homodimer. The cofactor is pyridoxal 5'-phosphate.

The catalysed reaction is 6-carboxyhexanoyl-[ACP] + L-alanine + H(+) = (8S)-8-amino-7-oxononanoate + holo-[ACP] + CO2. Its pathway is cofactor biosynthesis; biotin biosynthesis. Functionally, catalyzes the decarboxylative condensation of pimeloyl-[acyl-carrier protein] and L-alanine to produce 8-amino-7-oxononanoate (AON), [acyl-carrier protein], and carbon dioxide. The sequence is that of 8-amino-7-oxononanoate synthase from Hahella chejuensis (strain KCTC 2396).